We begin with the raw amino-acid sequence, 305 residues long: Porphobilinogen deaminase (305 aa).

Cys240 is subject to S-(dipyrrolylmethanemethyl)cysteine.

This sequence belongs to the HMBS family. As to quaternary structure, monomer. Requires dipyrromethane as cofactor.

It carries out the reaction 4 porphobilinogen + H2O = hydroxymethylbilane + 4 NH4(+). Its pathway is porphyrin-containing compound metabolism; protoporphyrin-IX biosynthesis; coproporphyrinogen-III from 5-aminolevulinate: step 2/4. In terms of biological role, tetrapolymerization of the monopyrrole PBG into the hydroxymethylbilane pre-uroporphyrinogen in several discrete steps. This Xylella fastidiosa (strain 9a5c) protein is Porphobilinogen deaminase (hemC).